The primary structure comprises 447 residues: Phosphoglucosamine mutase (447 aa).

S107 acts as the Phosphoserine intermediate in catalysis. The Mg(2+) site is built by S107, D246, D248, and D250. S107 carries the post-translational modification Phosphoserine.

The protein belongs to the phosphohexose mutase family. Mg(2+) serves as cofactor. Activated by phosphorylation.

The enzyme catalyses alpha-D-glucosamine 1-phosphate = D-glucosamine 6-phosphate. In terms of biological role, catalyzes the conversion of glucosamine-6-phosphate to glucosamine-1-phosphate. The sequence is that of Phosphoglucosamine mutase from Ralstonia pickettii (strain 12J).